A 1538-amino-acid chain; its full sequence is Dicer-like protein 1 (1538 aa).

The interval 39-72 (DPAESSADVHKDEHSSDNSDNDNEAVPKPNDFSQ) is disordered. Residues 45–55 (ADVHKDEHSSD) are compositionally biased toward basic and acidic residues. The Helicase ATP-binding domain maps to 134–315 (LFERAKTQNT…EAATRLETLL (182 aa)). 147–154 (LDTGSGKT) is an ATP binding site. The DEAH box motif lies at 260-263 (DEAH). The Helicase C-terminal domain occupies 460–619 (ELSKHFSDTT…ETLPEDRILH (160 aa)). Residues 652–742 (AIAILARYAS…NSIYHRRLPA (91 aa)) form the Dicer dsRNA-binding fold domain. A PAZ domain is found at 892-1020 (DTVSFVHNND…ICAEPLRISA (129 aa)). RNase III domains lie at 1044 to 1203 (IALE…LSGG) and 1254 to 1406 (ARHV…VDSK). E1295, D1392, and E1395 together coordinate Mg(2+). The DRBM domain maps to 1440 to 1508 (TFLHNKLTNE…SEKALAVLDG (69 aa)). C1452, H1479, C1520, and C1522 together coordinate Zn(2+).

This sequence belongs to the helicase family. Dicer subfamily. Requires Mg(2+) as cofactor. Mn(2+) is required as a cofactor.

Functionally, dicer-like endonuclease involved in cleaving double-stranded RNA in the RNA interference (RNAi) pathway. Produces 21 to 25 bp dsRNAs (siRNAs) which target the selective destruction of homologous RNAs leading to sequence-specific suppression of gene expression, called post-transcriptional gene silencing (PTGS). Part of a broad host defense response against viral infection and transposons. The sequence is that of Dicer-like protein 1 (dcl1) from Neosartorya fischeri (strain ATCC 1020 / DSM 3700 / CBS 544.65 / FGSC A1164 / JCM 1740 / NRRL 181 / WB 181) (Aspergillus fischerianus).